The sequence spans 693 residues: Elongation factor G (693 aa).

The tr-type G domain maps to 8–282; that stretch reads EKTRNIGIMA…AVIDYLPSPL (275 aa). GTP is bound by residues 17-24, 81-85, and 135-138; these read AHVDAGKT, DTPGH, and NKMD.

The protein belongs to the TRAFAC class translation factor GTPase superfamily. Classic translation factor GTPase family. EF-G/EF-2 subfamily.

Its subcellular location is the cytoplasm. Functionally, catalyzes the GTP-dependent ribosomal translocation step during translation elongation. During this step, the ribosome changes from the pre-translocational (PRE) to the post-translocational (POST) state as the newly formed A-site-bound peptidyl-tRNA and P-site-bound deacylated tRNA move to the P and E sites, respectively. Catalyzes the coordinated movement of the two tRNA molecules, the mRNA and conformational changes in the ribosome. In Streptococcus pneumoniae (strain Hungary19A-6), this protein is Elongation factor G.